The following is a 702-amino-acid chain: Amino-acid racemase (702 aa).

Residues 1 to 12 (MKHRANGIDLFR) lie on the Cytoplasmic side of the membrane. A helical membrane pass occupies residues 13–33 (IFAATMVVAIHTFPFQSIAPF). Residues 34-39 (LDEVIT) lie on the Extracellular side of the membrane. Residues 40-60 (LTVFRVAVPFFFMITGYFLLG) traverse the membrane as a helical segment. The Cytoplasmic segment spans residues 61 to 77 (RLSLNFSYNNNQRVKKY). Residues 78–98 (LYKIGMIYLYSILLYFPLSLL) form a helical membrane-spanning segment. Residues 99-120 (NGTISLKMNILLLLKVFIFDGT) are Extracellular-facing. Residues 121–141 (FYHLWYFPASIIGTILVTLLL) traverse the membrane as a helical segment. Position 142 (R142) is a topological domain, cytoplasmic. Residues 143–163 (SIGFKLTVAFSTCLYLVGLGG) form a helical membrane-spanning segment. Residues 164-191 (DSWYGITNQVPLLNKLYTFIFSWSDYTR) are Extracellular-facing. Residues 192–212 (SGVFFTPVFLCLGIFAYRVSK) form a helical membrane-spanning segment. Over 213 to 218 (KLTASK) the chain is Cytoplasmic. Residues 219 to 239 (ILNLLFYVFIIGMTFESIFLH) form a helical membrane-spanning segment. Residues 240–248 (RFTNVKHDS) are Extracellular-facing. The helical transmembrane segment at 249 to 269 (MYLLLPSCALILFLMLLNWQP) threads the bilayer. Topologically, residues 270–276 (KLKVKES) are cytoplasmic. Residues 277–297 (ADLTLLVYILHPLVIVIVHSI) traverse the membrane as a helical segment. Residues 298–307 (SKYIPILKNS) are Extracellular-facing. Residues 308–328 (LLNFLLVVVCSFILAQLLLNL) form a helical membrane-spanning segment. Over 329 to 702 (KRKLRVSKQK…LGSRLGTELN (374 aa)) the chain is Cytoplasmic. Residues 337 to 702 (QKIPFERASK…LGSRLGTELN (366 aa)) are racemase. K375 serves as the catalytic Proton acceptor. K375 bears the N6-(pyridoxal phosphate)lysine mark. R469 is a binding site for substrate. Y601 serves as the catalytic Proton acceptor. Substrate is bound at residue M650.

This sequence in the N-terminal section; belongs to the acyltransferase 3 family. In the C-terminal section; belongs to the alanine racemase family. It depends on pyridoxal 5'-phosphate as a cofactor.

It localises to the cell membrane. The protein is Amino-acid racemase (vanTE) of Enterococcus faecalis (Streptococcus faecalis).